Consider the following 159-residue polypeptide: Large ribosomal subunit protein uL10 (159 aa).

It belongs to the universal ribosomal protein uL10 family. As to quaternary structure, part of the ribosomal stalk of the 50S ribosomal subunit. The N-terminus interacts with L11 and the large rRNA to form the base of the stalk. The C-terminus forms an elongated spine to which L12 dimers bind in a sequential fashion forming a multimeric L10(L12)X complex.

Its function is as follows. Forms part of the ribosomal stalk, playing a central role in the interaction of the ribosome with GTP-bound translation factors. The sequence is that of Large ribosomal subunit protein uL10 from Sulfurimonas denitrificans (strain ATCC 33889 / DSM 1251) (Thiomicrospira denitrificans (strain ATCC 33889 / DSM 1251)).